The chain runs to 162 residues: Caveolin-2 (162 aa).

The Cytoplasmic segment spans residues 1 to 86; that stretch reads MGLETEKADA…FEVSKYLIYK (86 aa). Phosphotyrosine; by SRC is present on Y19. The segment at 19–40 is disordered; it reads YSRHSGLGYPEPEKCAKSTQDR. Phosphoserine is present on residues S20 and S23. Y27 carries the post-translational modification Phosphotyrosine; by SRC. Residues 29–40 show a composition bias toward basic and acidic residues; that stretch reads EPEKCAKSTQDR. S36 carries the post-translational modification Phosphoserine. The segment at residues 87 to 107 is an intramembrane region (helical); the sequence is VLTVLLAIPLAFVAGILFATL. At 108-162 the chain is on the cytoplasmic side; it reads SCLHIWIVVPFVKTCLMVLPSVQTVWHSITDGFIAPLYKSMGLIFSSISLRLSPE.

The protein belongs to the caveolin family. As to quaternary structure, monomer or homodimer. Interacts with CAV1; the interaction forms a stable heterooligomeric complex that is required for targeting to lipid rafts and for caveolae formation. Tyrosine phosphorylated forms do not form heterooligomers with the Tyr-19-phosphorylated form existing as a monomer or dimer, and the Tyr-27-form as a monomer only. Interacts (tyrosine phosphorylated form) with the SH2 domain-containing proteins, RASA1, NCK1 and SRC. Interacts (tyrosine phosphorylated form) with INSR, the interaction (Tyr-27-phosphorylated form) is increased on insulin stimulation. Interacts (Tyr-19 phosphorylated form) with MAPK1 (phosphorylated form); the interaction, promoted by insulin, leads to nuclear location and MAPK1 activation. Interacts with STAT3; the interaction is increased on insulin-induced tyrosine phosphorylation leading to STAT activation. Post-translationally, phosphorylated on serine and tyrosine residues. CAV1 promotes phosphorylation on Ser-23 which then targets the complex to the plasma membrane, lipid rafts and caveolae. Phosphorylation on Ser-36 appears to modulate mitosis in endothelial cells. Phosphorylation on both Tyr-19 and Tyr-27 is required for insulin-induced 'Ser-727' phosphorylation of STAT3 and its activation. Phosphorylation on Tyr-19 is required for insulin-induced phosphorylation of MAPK1 and DNA binding of STAT3. Tyrosine phosphorylation is induced by both EGF and insulin (By. similarity).

It localises to the nucleus. The protein localises to the cytoplasm. The protein resides in the golgi apparatus membrane. It is found in the cell membrane. Its subcellular location is the membrane. It localises to the caveola. In terms of biological role, may act as a scaffolding protein within caveolar membranes. Interacts directly with G-protein alpha subunits and can functionally regulate their activity. Acts as an accessory protein in conjunction with CAV1 in targeting to lipid rafts and driving caveolae formation. The Ser-36 phosphorylated form has a role in modulating mitosis in endothelial cells. Positive regulator of cellular mitogenesis of the MAPK signaling pathway. Required for the insulin-stimulated nuclear translocation and activation of MAPK1 and STAT3, and the subsequent regulation of cell cycle progression. The protein is Caveolin-2 (CAV2) of Didelphis virginiana (North American opossum).